Reading from the N-terminus, the 129-residue chain is Protein UL131A (129 aa).

The signal sequence occupies residues 1-18; the sequence is MRLCRVWLSVCLCAVVLG.

Forms the envelope pentamer complex (PC) composed of gH, gL, UL128, UL130, and UL131A. The pentamer interacts with host NRP2. The interaction with gH is important for the formation of UL128, UL130, gH-gL complex.

Its subcellular location is the virion membrane. In terms of biological role, plays a role in viral entry into host cells. Forms a pentameric complex at the surface of the viral envelope together with gH, gL, UL130 and UL131. This complex is required for entry in epithelial, endothelial and myeloid host cells. Mechanistically, engages host receptor(s) including neurophilin 2/NRP2 to mediate infection. Contributes to the formation of the complex between UL128, UL130 and gH-gL. This chain is Protein UL131A (UL131A), found in Human cytomegalovirus (strain Merlin) (HHV-5).